Here is a 222-residue protein sequence, read N- to C-terminus: Coiled-coil domain-containing protein 43 (222 aa).

Lys-93 participates in a covalent cross-link: Glycyl lysine isopeptide (Lys-Gly) (interchain with G-Cter in SUMO1). Residues 119 to 143 (SEEEKQRKAALLAQYADVTDEEDEA) are a coiled coil. Residues 136–222 (VTDEEDEADK…KRTQKGERKR (87 aa)) form a disordered region. Phosphothreonine is present on Thr-137. Residues 152-168 (STANVSSDRTLFRNTNV) show a composition bias toward polar residues. Residues 172-209 (LNARKLERDSLRDESQRKKEQDKLQREKDKLAKQERKE) are compositionally biased toward basic and acidic residues. Residues 175 to 217 (RKLERDSLRDESQRKKEQDKLQREKDKLAKQERKEKEKKRTQK) are a coiled coil. The segment covering 210–222 (KEKKRTQKGERKR) has biased composition (basic residues).

It belongs to the CCDC43 family.

The polypeptide is Coiled-coil domain-containing protein 43 (Ccdc43) (Mus musculus (Mouse)).